A 688-amino-acid chain; its full sequence is PHD finger protein 21A (688 aa).

Residue Lys-65 forms a Glycyl lysine isopeptide (Lys-Gly) (interchain with G-Cter in SUMO2) linkage. Disordered stretches follow at residues 78-127 (SQSE…LTAS) and 327-373 (PQTV…ENPQ). A compositionally biased stretch (low complexity) spans 85 to 127 (QTAQQQPLQPLQQQQPQQPQQQQQQQQQHAQQSAAAPPSLTAS). Residues 336 to 354 (SLEKQTVKSHPEAEEKQAE) are compositionally biased toward basic and acidic residues. The segment at residues 434-446 (TRKRGRPPKYNAV) is a DNA-binding region (a.T hook). A disordered region spans residues 449 to 471 (FGALTPTSPPSSHPDSPENEKTE). At Thr-453 the chain carries Phosphothreonine. Ser-456 is subject to Phosphoserine. The segment at 497–544 (EDFCSVCRKSGQLLMCDTCSRVYHLDCLEPPLKTIPKGMWICPRCQDQ) adopts a PHD-type zinc-finger fold. Residues 571–609 (KEEEKQKLLKWSSDLKQEREQLEQKVKELSSSISKCMEM) are a coiled coil. The tract at residues 650-688 (GALSNGPDCTPPANAASTPAPSPSSQSCTANCNQGEETK) is disordered. A compositionally biased stretch (low complexity) spans 660-679 (PPANAASTPAPSPSSQSCTA).

In terms of assembly, component of a BHC histone deacetylase complex that contains HDAC1, HDAC2, HMG20B/BRAF35, KDM1A, RCOR1/CoREST and PHF21A/BHC80. The BHC complex may also contain ZMYM2, ZNF217, ZMYM3, GSE1 and GTF2I. In the complex, it interacts directly with HDAC1, HDAC2, HMG20B/BRAF35, KDM1A and RCOR1/CoREST. In terms of tissue distribution, expressed in the brain and testis. Weakly or not expressed in other tissues tested. Localized throughout the central nervous system (CNS) in brain, including the cerebellum, hippocampus, and cortex. Notably present in neuronal cells of granular cell layer and dentate gyrus in cerebellum and hippocampus, respectively. In the seminiferous tubules, the signals it is present strongly in spermatocytes, and weakly in spermatogonia and round spermatids. In some cases, it is also observed solely in spermatocytes (at protein level).

The protein localises to the nucleus. Its function is as follows. Component of the BHC complex, a corepressor complex that represses transcription of neuron-specific genes in non-neuronal cells. The BHC complex is recruited at RE1/NRSE sites by REST and acts by deacetylating and demethylating specific sites on histones, thereby acting as a chromatin modifier. In the BHC complex, it may act as a scaffold. Inhibits KDM1A-mediated demethylation of 'Lys-4' of histone H3 in vitro, suggesting a role in demethylation regulation. The sequence is that of PHD finger protein 21A from Mus musculus (Mouse).